Consider the following 240-residue polypeptide: Short palate, lung and nasal epithelium carcinoma-associated protein 2B (240 aa).

A signal peptide spans 1 to 19 (MVQLWKLVLLCGLLAGTSA). Cys-163 and Cys-206 are joined by a disulfide.

The protein belongs to the BPI/LBP/Plunc superfamily. Plunc family. Parotid glands.

It is found in the secreted. This is Short palate, lung and nasal epithelium carcinoma-associated protein 2B (SPLUNC2B) from Bos taurus (Bovine).